The sequence spans 284 residues: Nucleotide-binding protein CPS_4546 (284 aa).

8-15 lines the ATP pocket; it reads GRSGSGKS. 56–59 is a binding site for GTP; that stretch reads DVRN.

Belongs to the RapZ-like family.

Functionally, displays ATPase and GTPase activities. This Colwellia psychrerythraea (strain 34H / ATCC BAA-681) (Vibrio psychroerythus) protein is Nucleotide-binding protein CPS_4546.